The primary structure comprises 288 residues: 2-hydroxy-6-oxononadienedioate/2-hydroxy-6-oxononatrienedioate hydrolase (288 aa).

H267 acts as the Proton acceptor in catalysis.

This sequence belongs to the AB hydrolase superfamily. MhpC family. As to quaternary structure, homodimer.

It carries out the reaction (2Z,4E)-2-hydroxy-6-oxonona-2,4-dienedioate + H2O = (2Z)-2-hydroxypenta-2,4-dienoate + succinate + H(+). The catalysed reaction is (2Z,4E,7E)-2-hydroxy-6-oxonona-2,4,7-trienedioate + H2O = (2Z)-2-hydroxypenta-2,4-dienoate + fumarate + H(+). Its pathway is aromatic compound metabolism; 3-phenylpropanoate degradation. Catalyzes the cleavage of the C5-C6 bond of 2-hydroxy-6-oxononadienedioate and 2-hydroxy-6-oxononatrienedioate, a dienol ring fission product of the bacterial meta-cleavage pathway for degradation of phenylpropionic acid. This Klebsiella pneumoniae subsp. pneumoniae (strain ATCC 700721 / MGH 78578) protein is 2-hydroxy-6-oxononadienedioate/2-hydroxy-6-oxononatrienedioate hydrolase.